Consider the following 476-residue polypeptide: Lactate utilization protein B (476 aa).

4Fe-4S ferredoxin-type domains are found at residues 304–334 (GTEF…GHSY) and 353–382 (YDDY…LHEL). 7 residues coordinate [4Fe-4S] cluster: cysteine 313, cysteine 316, cysteine 319, cysteine 323, cysteine 366, cysteine 369, and cysteine 373. The tract at residues 440 to 476 (KGPGPLKAWTESREFPAPSKERFRDWFQTRQKGGNPS) is disordered. Over residues 449–466 (TESREFPAPSKERFRDWF) the composition is skewed to basic and acidic residues. Over residues 467–476 (QTRQKGGNPS) the composition is skewed to polar residues.

The protein belongs to the LutB/YkgF family.

Is involved in L-lactate degradation and allows cells to grow with lactate as the sole carbon source. Has probably a role as an electron transporter during oxidation of L-lactate. The protein is Lactate utilization protein B of Geobacillus kaustophilus (strain HTA426).